Here is a 677-residue protein sequence, read N- to C-terminus: Galactocerebrosidase (677 aa).

Positions 1-33 (MGTVPAGSRRAPGCGEGMFILCLALLLAPGAPA) are cleaved as a signal peptide. The substrate site is built by threonine 101, tryptophan 143, and asparagine 189. Glutamate 190 acts as the Proton donor/acceptor in catalysis. The active-site Nucleophile is the glutamate 265. A disulfide bridge links cysteine 278 with cysteine 385. N-linked (GlcNAc...) asparagine glycans are attached at residues asparagine 291, asparagine 370, and asparagine 381. A substrate-binding site is contributed by arginine 387. N-linked (GlcNAc...) asparagine glycans are attached at residues asparagine 394, asparagine 399, asparagine 424, asparagine 441, asparagine 509, asparagine 549, and asparagine 630.

This sequence belongs to the glycosyl hydrolase 59 family.

Its subcellular location is the lysosome. It catalyses the reaction a beta-D-galactosyl-(1&lt;-&gt;1')-N-acylsphing-4-enine + H2O = an N-acylsphing-4-enine + D-galactose. It carries out the reaction beta-D-galactosyl-(1&lt;-&gt;1)-sphing-4-enine + H2O = sphing-4-enine + D-galactose. The enzyme catalyses a D-galactosylceramide + H2O = an N-acyl-sphingoid base + D-galactose. In terms of biological role, hydrolyzes the galactose ester bonds of glycolipids such as galactosylceramide and galactosylsphingosine. The polypeptide is Galactocerebrosidase (Xenopus laevis (African clawed frog)).